The sequence spans 144 residues: UPF0735 ACT domain-containing protein NT01CX_1681 (144 aa).

Residues 68 to 143 (TIGFLLSHKA…NVVKVSLIAM (76 aa)) enclose the ACT domain.

It belongs to the UPF0735 family.

This is UPF0735 ACT domain-containing protein NT01CX_1681 from Clostridium novyi (strain NT).